A 231-amino-acid chain; its full sequence is 7-cyano-7-deazaguanine synthase (231 aa).

8–18 (LSGGLDSATAA) serves as a coordination point for ATP. Zn(2+)-binding residues include Cys-189, Cys-197, Cys-200, and Cys-203.

It belongs to the QueC family. It depends on Zn(2+) as a cofactor.

The catalysed reaction is 7-carboxy-7-deazaguanine + NH4(+) + ATP = 7-cyano-7-deazaguanine + ADP + phosphate + H2O + H(+). The protein operates within purine metabolism; 7-cyano-7-deazaguanine biosynthesis. Its function is as follows. Catalyzes the ATP-dependent conversion of 7-carboxy-7-deazaguanine (CDG) to 7-cyano-7-deazaguanine (preQ(0)). In Synechococcus elongatus (strain ATCC 33912 / PCC 7942 / FACHB-805) (Anacystis nidulans R2), this protein is 7-cyano-7-deazaguanine synthase.